A 491-amino-acid polypeptide reads, in one-letter code: Probable glycine dehydrogenase (decarboxylating) subunit 2 (491 aa).

Lys-273 is subject to N6-(pyridoxal phosphate)lysine.

This sequence belongs to the GcvP family. C-terminal subunit subfamily. As to quaternary structure, the glycine cleavage system is composed of four proteins: P, T, L and H. In this organism, the P 'protein' is a heterodimer of two subunits. Requires pyridoxal 5'-phosphate as cofactor.

The catalysed reaction is N(6)-[(R)-lipoyl]-L-lysyl-[glycine-cleavage complex H protein] + glycine + H(+) = N(6)-[(R)-S(8)-aminomethyldihydrolipoyl]-L-lysyl-[glycine-cleavage complex H protein] + CO2. The glycine cleavage system catalyzes the degradation of glycine. The P protein binds the alpha-amino group of glycine through its pyridoxal phosphate cofactor; CO(2) is released and the remaining methylamine moiety is then transferred to the lipoamide cofactor of the H protein. This Bacillus cereus (strain B4264) protein is Probable glycine dehydrogenase (decarboxylating) subunit 2.